The primary structure comprises 620 residues: MSFDIAKYPTLALVDSTQELRLLPKESLPKLCDELRRYLLDSVSRSSGHFASGLGTVELTVALHYVYNTPFDQLIWDVGHQAYPHKILTGRRDKIGTIRQKGGLHPFPWRGESEYDVLSVGHSSTSISAGIGIAVAAEKEGKDRRTVCVIGDGAITAGMAFEAMNHAGDIRPDMLVILNDNEMSISENVGALNNHLAQLLSGKLYSSLREGGKKVFSGVPPIKELLKRTEEHIKGMVVPGTLFEELGFNYIGPVDGHDVMGLISTLKNMRDLKGPQFLHIMTKKGRGYEPAEKDPITFHAVPKFDPSSGCLPKSSGSLPGYSKIFGDWLCETAAKDSKLMAITPAMREGSGMVEFSRKFPDRYFDVAIAEQHAVTFAAGLAIGGYKPVVAIYSTFLQRAYDQVIHDIAIQKLPVMFAIDRAGIVGADGQTHQGAFDLSYLRCIPDMVIMTPSDENECRQMLFTGYHYNDGPTAVRYPRGNAQGVALTPLEKLPIGKGIVKRHGEKLAILNFGTLMPEAAKVAEALNATLVDMRFVKPLDETLILEMAARHEALATLEENAIMGGAGSGVNEVLMAHRKPVPVLNIGLPDFFIPQGTQEEARAELGLDAAGIEAKIKAWLA.

Thiamine diphosphate is bound by residues histidine 80 and glycine 121–serine 123. Aspartate 152 serves as a coordination point for Mg(2+). Residues glycine 153–alanine 154, asparagine 181, tyrosine 288, and glutamate 370 contribute to the thiamine diphosphate site. Asparagine 181 is a binding site for Mg(2+).

Belongs to the transketolase family. DXPS subfamily. As to quaternary structure, homodimer. The cofactor is Mg(2+). Thiamine diphosphate serves as cofactor.

The enzyme catalyses D-glyceraldehyde 3-phosphate + pyruvate + H(+) = 1-deoxy-D-xylulose 5-phosphate + CO2. The protein operates within metabolic intermediate biosynthesis; 1-deoxy-D-xylulose 5-phosphate biosynthesis; 1-deoxy-D-xylulose 5-phosphate from D-glyceraldehyde 3-phosphate and pyruvate: step 1/1. Its function is as follows. Catalyzes the acyloin condensation reaction between C atoms 2 and 3 of pyruvate and glyceraldehyde 3-phosphate to yield 1-deoxy-D-xylulose-5-phosphate (DXP). This chain is 1-deoxy-D-xylulose-5-phosphate synthase, found in Salmonella arizonae (strain ATCC BAA-731 / CDC346-86 / RSK2980).